Here is a 396-residue protein sequence, read N- to C-terminus: MPEGALRNFTINFGPQHPAAHGVLRLVLELDGEIVERVDPHIGLLHRGTEKLIEAKTYLQAIPYFDRLDYVAPMNQEHAFCLAAEKLLDIAVPRRAQLIRVLYCEIGRILSHLLNVTTQAMDVGALTPPLWGFEEREKLMMFYERASGSRMHAAYFRVGGVHQDLPPKLVDDIEAWCVAFPQVIDDLDRLLTGNRIFKQRNVDIGVVTLAQAWEWGFSGVMVRGSGAAWDLRKSQPYECYAELEFDIPIGKNGDCYDRYCIRMEEMRQSVRIMQQCIAKLRAPDGGGPVAVQDNKIFPPRRGEMKRSMESLIHHFKLYTEGFRVPAGEVYVAVEAPKGEFGVFLVSDGSNKPYKCKIRAPGFAHLQAMDFISRGHLLADVSAILGSLDIVFGEVDR.

It belongs to the complex I 49 kDa subunit family. In terms of assembly, NDH-1 is composed of 14 different subunits. Subunits NuoB, C, D, E, F, and G constitute the peripheral sector of the complex.

It localises to the cell inner membrane. The catalysed reaction is a quinone + NADH + 5 H(+)(in) = a quinol + NAD(+) + 4 H(+)(out). In terms of biological role, NDH-1 shuttles electrons from NADH, via FMN and iron-sulfur (Fe-S) centers, to quinones in the respiratory chain. The immediate electron acceptor for the enzyme in this species is believed to be ubiquinone. Couples the redox reaction to proton translocation (for every two electrons transferred, four hydrogen ions are translocated across the cytoplasmic membrane), and thus conserves the redox energy in a proton gradient. The sequence is that of NADH-quinone oxidoreductase subunit D from Rhodopseudomonas palustris (strain BisB18).